Consider the following 422-residue polypeptide: Protein MANNAN SYNTHESIS-RELATED 1 (422 aa).

Residues 1–6 are Cytoplasmic-facing; it reads MGVDLR. Residues 7–26 form a helical; Signal-anchor for type II membrane protein membrane-spanning segment; that stretch reads QVVAGILTITMFVMLGQMLH. The Lumenal segment spans residues 27–422; the sequence is RDYFDSLQEK…KNHLAYSCFC (396 aa). 263 to 265 provides a ligand contact to substrate; that stretch reads DLR.

Belongs to the glycosyltransferase GT106 family. Widely expressed.

The protein resides in the golgi apparatus membrane. The protein operates within glycan biosynthesis. In terms of biological role, glycosyltransferase involved in mannan biosynthesis. In Arabidopsis thaliana (Mouse-ear cress), this protein is Protein MANNAN SYNTHESIS-RELATED 1.